Here is a 211-residue protein sequence, read N- to C-terminus: Inactive ribonuclease-like protein 10 (211 aa).

The signal sequence occupies residues 1 to 24 (MKLTLVQIFFMMLLLLLGLGVGLG).

It belongs to the pancreatic ribonuclease family. Post-translationally, the N-terminus is blocked. Glycosylated.

It is found in the secreted. Functionally, secreted proximal epididymal protein required for post-testicular sperm maturation and male fertility. May be involved in sperm adhesion to the egg zona pellucida. Does not have ribonuclease activity. The polypeptide is Inactive ribonuclease-like protein 10 (RNASE10) (Bos taurus (Bovine)).